We begin with the raw amino-acid sequence, 370 residues long: MSSAANEGCVYLFIVVLRLSSFSCVNSFIHSFTRSRTRSSYSLDERSLVSYSIVYVAMNKSSKAFQVPNKVITKEDITPLSRSHTKKADTRGTADGKNTTASAVEATPIIITTARSIDTAGSLSENATEDDGTQNGDLHDDDDDDDLESTLGYSSEPDPLFSPCHQPSFTNSTFSYSADNELPMEENHNKNNFHDSSESSIFLPQIQQSFFFGDNSKSDANNTDFWKEVNGTAEEAICLQETRQRKCSLVALHPGDATTSSNDTLGIEDFIKDDINSAEAMEPSPSSSPSSSLLDNLDYNIKLLCYRDNEGKFTLKKRKFLKNSLRSSSAISKKWKPLSKRDKLLKRAIRRKSGVCQTLSAGFGIGEFML.

A signal peptide spans Met-1–Ser-27. Asn-59, Asn-98, and Asn-126 each carry an N-linked (GlcNAc...) asparagine glycan. Disordered stretches follow at residues Ser-81 to Ala-101 and Leu-123 to Pro-167. Over residues His-139–Glu-148 the composition is skewed to acidic residues. N-linked (GlcNAc...) asparagine glycans are attached at residues Asn-171, Asn-221, Asn-230, and Asn-262.

This is an uncharacterized protein from Saccharomyces cerevisiae (strain ATCC 204508 / S288c) (Baker's yeast).